Reading from the N-terminus, the 355-residue chain is Alanine racemase (355 aa).

The active-site Proton acceptor; specific for D-alanine is the K34. K34 carries the post-translational modification N6-(pyridoxal phosphate)lysine. R133 lines the substrate pocket. The active-site Proton acceptor; specific for L-alanine is Y249. M297 lines the substrate pocket.

Belongs to the alanine racemase family. Pyridoxal 5'-phosphate is required as a cofactor.

It carries out the reaction L-alanine = D-alanine. The protein operates within amino-acid biosynthesis; D-alanine biosynthesis; D-alanine from L-alanine: step 1/1. Its function is as follows. Catalyzes the interconversion of L-alanine and D-alanine. May also act on other amino acids. This chain is Alanine racemase (alr), found in Rickettsia africae (strain ESF-5).